The primary structure comprises 246 residues: Pyridoxine 5'-phosphate synthase (246 aa).

Asparagine 12 contacts 3-amino-2-oxopropyl phosphate. A 1-deoxy-D-xylulose 5-phosphate-binding site is contributed by 14–15; sequence DH. Arginine 23 lines the 3-amino-2-oxopropyl phosphate pocket. Histidine 48 functions as the Proton acceptor in the catalytic mechanism. 1-deoxy-D-xylulose 5-phosphate contacts are provided by arginine 50 and histidine 55. Catalysis depends on glutamate 75, which acts as the Proton acceptor. Position 105 (threonine 105) interacts with 1-deoxy-D-xylulose 5-phosphate. The Proton donor role is filled by histidine 196. 3-amino-2-oxopropyl phosphate contacts are provided by residues glycine 197 and 218 to 219; that span reads GH.

The protein belongs to the PNP synthase family. Homooctamer; tetramer of dimers.

The protein localises to the cytoplasm. It catalyses the reaction 3-amino-2-oxopropyl phosphate + 1-deoxy-D-xylulose 5-phosphate = pyridoxine 5'-phosphate + phosphate + 2 H2O + H(+). The protein operates within cofactor biosynthesis; pyridoxine 5'-phosphate biosynthesis; pyridoxine 5'-phosphate from D-erythrose 4-phosphate: step 5/5. In terms of biological role, catalyzes the complicated ring closure reaction between the two acyclic compounds 1-deoxy-D-xylulose-5-phosphate (DXP) and 3-amino-2-oxopropyl phosphate (1-amino-acetone-3-phosphate or AAP) to form pyridoxine 5'-phosphate (PNP) and inorganic phosphate. The polypeptide is Pyridoxine 5'-phosphate synthase (Thioalkalivibrio sulfidiphilus (strain HL-EbGR7)).